Consider the following 182-residue polypeptide: Adenine phosphoribosyltransferase (182 aa).

The protein belongs to the purine/pyrimidine phosphoribosyltransferase family. Homodimer.

It is found in the cytoplasm. The catalysed reaction is AMP + diphosphate = 5-phospho-alpha-D-ribose 1-diphosphate + adenine. It functions in the pathway purine metabolism; AMP biosynthesis via salvage pathway; AMP from adenine: step 1/1. Functionally, catalyzes a salvage reaction resulting in the formation of AMP, that is energically less costly than de novo synthesis. The protein is Adenine phosphoribosyltransferase of Streptomyces avermitilis (strain ATCC 31267 / DSM 46492 / JCM 5070 / NBRC 14893 / NCIMB 12804 / NRRL 8165 / MA-4680).